Reading from the N-terminus, the 544-residue chain is MERKHMSALSIYQSLSGGKTPQAEDKAPPAKKVKRKENGVRPSKKATKKKGTKPLKSSVRSSSSEKEKHEGERDCREMNGKRFDNVALDILLTDLAKVNNSRDRANRLFQWLIHPVQDKSFFRDNWEKKPILIQRQNADYYKGLFSTAEFDRILRNDDVQYGVNLDVTSYTNGKRETHNPPGRALPYTVWDFYESGCSIRMLNPQAFSSTVWQVLSVLQEKFGSMAGANVYLTPPGTQGFAPHFDDIEAFVVQLEGRKHWRVYNPRCEDEVLSLVSSPNFSQDEIGEPVMDVVLEAGDLLYFPRGFVHQGDCLPDAHSLHITISSYQRNSWGDLMLKLMPAALEVAMEEDVEFRKGLPLDYLQYMGVQNSEKEDPRRDRFMAHIQGLMKKLVSFAPVDAAVDQKAKDFLHDCLPPLLTAEEKAGSVYGAPARWGDSEALDVAVELKSQTRIKLVRAGAARLCSDGDTVHLYYTTENSRVYHKEASKSFEMKTEHIDAMEFLIHSYPKFVSVASLPCETAEAKMSLAELLFEKGLIFTAEPLTAQ.

The segment at 1 to 78 (MERKHMSALS…HEGERDCREM (78 aa)) is disordered. Over residues 10–19 (SIYQSLSGGK) the composition is skewed to polar residues. Over residues 42-53 (PSKKATKKKGTK) the composition is skewed to basic residues. Over residues 63 to 78 (SSEKEKHEGERDCREM) the composition is skewed to basic and acidic residues. The 146-residue stretch at 197-342 (CSIRMLNPQA…DLMLKLMPAA (146 aa)) folds into the JmjC domain. Residues His243, Asp245, and His308 each contribute to the Fe cation site.

It belongs to the ROX family. NO66 subfamily. The cofactor is Fe(2+).

It is found in the nucleus. Its subcellular location is the nucleolus. The protein localises to the nucleoplasm. It catalyses the reaction N(6),N(6)-dimethyl-L-lysyl(36)-[histone H3] + 2 2-oxoglutarate + 2 O2 = L-lysyl(36)-[histone H3] + 2 formaldehyde + 2 succinate + 2 CO2. The catalysed reaction is N(6)-methyl-L-lysyl-[protein] + 2-oxoglutarate + O2 = L-lysyl-[protein] + formaldehyde + succinate + CO2. The enzyme catalyses L-histidyl-[protein] + 2-oxoglutarate + O2 = (3S)-3-hydroxy-L-histidyl-[protein] + succinate + CO2. In terms of biological role, oxygenase that can act as both a histone lysine demethylase and a ribosomal histidine hydroxylase. Specifically demethylates 'Lys-4' (H3K4me) and 'Lys-36' (H3K36me) of histone H3, thereby playing a central role in histone code. Preferentially demethylates trimethylated H3 'Lys-4' (H3K4me3) and monomethylated H3 'Lys-4' (H3K4me1) residues, while it has weaker activity for dimethylated H3 'Lys-36' (H3K36me2). Also catalyzes demethylation of non-histone proteins. Also catalyzes the hydroxylation of 60S ribosomal protein L8 on 'His-216', thereby playing a role in ribosome biogenesis. This is Ribosomal oxygenase 1 (riox1) from Danio rerio (Zebrafish).